We begin with the raw amino-acid sequence, 430 residues long: CinA-like protein (430 aa).

This sequence belongs to the CinA family.

The protein is CinA-like protein of Prochlorococcus marinus (strain NATL1A).